We begin with the raw amino-acid sequence, 289 residues long: Acetyl-coenzyme A carboxylase carboxyl transferase subunit beta (289 aa).

Residues 27–289 enclose the CoA carboxyltransferase N-terminal domain; the sequence is LWSKCPSCES…SFMRVPAGAA (263 aa). Residues C31, C34, C50, and C53 each coordinate Zn(2+). The segment at 31-53 adopts a C4-type zinc-finger fold; the sequence is CPSCESVLYRTDLESNSEVCPKC.

This sequence belongs to the AccD/PCCB family. As to quaternary structure, acetyl-CoA carboxylase is a heterohexamer composed of biotin carboxyl carrier protein (AccB), biotin carboxylase (AccC) and two subunits each of ACCase subunit alpha (AccA) and ACCase subunit beta (AccD). The cofactor is Zn(2+).

It is found in the cytoplasm. The catalysed reaction is N(6)-carboxybiotinyl-L-lysyl-[protein] + acetyl-CoA = N(6)-biotinyl-L-lysyl-[protein] + malonyl-CoA. It functions in the pathway lipid metabolism; malonyl-CoA biosynthesis; malonyl-CoA from acetyl-CoA: step 1/1. In terms of biological role, component of the acetyl coenzyme A carboxylase (ACC) complex. Biotin carboxylase (BC) catalyzes the carboxylation of biotin on its carrier protein (BCCP) and then the CO(2) group is transferred by the transcarboxylase to acetyl-CoA to form malonyl-CoA. This is Acetyl-coenzyme A carboxylase carboxyl transferase subunit beta from Methylobacillus flagellatus (strain ATCC 51484 / DSM 6875 / VKM B-1610 / KT).